The sequence spans 780 residues: Tricorn protease-interacting factor F3 (780 aa).

Residues Glu101 and 230-234 (GAMEN) contribute to the substrate site. Position 265 (His265) interacts with Zn(2+). The Proton acceptor role is filled by Glu266. Residues His269 and Glu288 each contribute to the Zn(2+) site.

The protein belongs to the peptidase M1 family. In terms of assembly, part of the tricorn proteolytic complex. It depends on Zn(2+) as a cofactor.

It localises to the cytoplasm. Its function is as follows. Proteases F1, F2 and F3 degrade oligopeptides produced by Tricorn (themselves probably produced by the proteasome), yielding free amino acids. The protein is Tricorn protease-interacting factor F3 (trf3) of Thermoplasma acidophilum (strain ATCC 25905 / DSM 1728 / JCM 9062 / NBRC 15155 / AMRC-C165).